Consider the following 430-residue polypeptide: tRNA(Ile)-lysidine synthase (430 aa).

Position 27 to 32 (27 to 32 (SGGSDS)) interacts with ATP.

This sequence belongs to the tRNA(Ile)-lysidine synthase family.

It localises to the cytoplasm. The catalysed reaction is cytidine(34) in tRNA(Ile2) + L-lysine + ATP = lysidine(34) in tRNA(Ile2) + AMP + diphosphate + H(+). Ligates lysine onto the cytidine present at position 34 of the AUA codon-specific tRNA(Ile) that contains the anticodon CAU, in an ATP-dependent manner. Cytidine is converted to lysidine, thus changing the amino acid specificity of the tRNA from methionine to isoleucine. The protein is tRNA(Ile)-lysidine synthase of Rickettsia typhi (strain ATCC VR-144 / Wilmington).